Here is a 170-residue protein sequence, read N- to C-terminus: Lipoprotein signal peptidase (170 aa).

Helical transmembrane passes span valine 5 to glycine 25, tryptophan 70 to valine 90, and alanine 98 to histidine 118. Catalysis depends on residues aspartate 123 and aspartate 141. The helical transmembrane segment at phenylalanine 137–isoleucine 157 threads the bilayer.

Belongs to the peptidase A8 family.

The protein localises to the cell inner membrane. It catalyses the reaction Release of signal peptides from bacterial membrane prolipoproteins. Hydrolyzes -Xaa-Yaa-Zaa-|-(S,diacylglyceryl)Cys-, in which Xaa is hydrophobic (preferably Leu), and Yaa (Ala or Ser) and Zaa (Gly or Ala) have small, neutral side chains.. The protein operates within protein modification; lipoprotein biosynthesis (signal peptide cleavage). In terms of biological role, this protein specifically catalyzes the removal of signal peptides from prolipoproteins. The chain is Lipoprotein signal peptidase from Cellvibrio japonicus (strain Ueda107) (Pseudomonas fluorescens subsp. cellulosa).